A 557-amino-acid chain; its full sequence is Formate--tetrahydrofolate ligase (557 aa).

Residue 67–74 (TPAGEGKT) coordinates ATP.

The protein belongs to the formate--tetrahydrofolate ligase family.

It catalyses the reaction (6S)-5,6,7,8-tetrahydrofolate + formate + ATP = (6R)-10-formyltetrahydrofolate + ADP + phosphate. The protein operates within one-carbon metabolism; tetrahydrofolate interconversion. This is Formate--tetrahydrofolate ligase from Cereibacter sphaeroides (strain ATCC 17025 / ATH 2.4.3) (Rhodobacter sphaeroides).